We begin with the raw amino-acid sequence, 169 residues long: Inorganic pyrophosphatase (169 aa).

Substrate-binding residues include K20, R34, and Y46. Positions 56, 61, and 93 each coordinate Mg(2+). Position 130 (Y130) interacts with substrate.

This sequence belongs to the PPase family. In terms of assembly, homohexamer. It depends on Mg(2+) as a cofactor.

Its subcellular location is the cytoplasm. It carries out the reaction diphosphate + H2O = 2 phosphate + H(+). Catalyzes the hydrolysis of inorganic pyrophosphate (PPi) forming two phosphate ions. This is Inorganic pyrophosphatase from Methanosarcina mazei (strain ATCC BAA-159 / DSM 3647 / Goe1 / Go1 / JCM 11833 / OCM 88) (Methanosarcina frisia).